The chain runs to 71 residues: MRTEQITAKALKQIGDDRYKLSLIVAKRAEALANGAQALIEGDTSKMKFADIALMEVAEGKIGLEAIVEGK.

This sequence belongs to the RNA polymerase subunit omega family. The RNAP catalytic core consists of 2 alpha, 1 beta, 1 beta' and 1 omega subunit. When a sigma factor is associated with the core the holoenzyme is formed, which can initiate transcription.

It catalyses the reaction RNA(n) + a ribonucleoside 5'-triphosphate = RNA(n+1) + diphosphate. Its function is as follows. Promotes RNA polymerase assembly. Latches the N- and C-terminal regions of the beta' subunit thereby facilitating its interaction with the beta and alpha subunits. The protein is DNA-directed RNA polymerase subunit omega of Campylobacter curvus (strain 525.92).